We begin with the raw amino-acid sequence, 238 residues long: 5-amino-6-(5-phospho-D-ribitylamino)uracil phosphatase YigB (238 aa).

Asp16 (nucleophile) is an active-site residue. Mg(2+) contacts are provided by Asp16, Asp18, and Asp188. 16-18 (DLD) contacts substrate.

Belongs to the HAD-like hydrolase superfamily. Requires Mg(2+) as cofactor. Mn(2+) serves as cofactor. Co(2+) is required as a cofactor. It depends on Zn(2+) as a cofactor.

The catalysed reaction is 5-amino-6-(5-phospho-D-ribitylamino)uracil + H2O = 5-amino-6-(D-ribitylamino)uracil + phosphate. It functions in the pathway cofactor biosynthesis; riboflavin biosynthesis; 5-amino-6-(D-ribitylamino)uracil from GTP: step 4/4. Its function is as follows. Catalyzes the dephosphorylation of 5-amino-6-(5-phospho-D-ribitylamino)uracil, and thus could be involved in the riboflavin biosynthesis pathway. Is also able to dephosphorylate flavin mononucleotide (FMN) and other phosphoric acid esters. YigB is important for the formation of dormant persister cells. In Escherichia coli (strain K12), this protein is 5-amino-6-(5-phospho-D-ribitylamino)uracil phosphatase YigB (yigB).